A 642-amino-acid polypeptide reads, in one-letter code: Bifunctional protein glk (642 aa).

Positions 1 to 340 are glucokinase; the sequence is MSTGAQSKAA…QLSNRSGGAS (340 aa). 23–28 provides a ligand contact to ATP; that stretch reads ADVGGT. In terms of domain architecture, HTH rpiR-type spans 341–417; it reads SAVFERIRQM…LKLATGLTGT (77 aa). The segment at 341 to 642 is putative HTH-type transcriptional regulator; the sequence is SAVFERIRQM…SPAAKDVARD (302 aa). A DNA-binding region (H-T-H motif) is located at residues 377-396; the sequence is IVDIARKADVSQPTVIRFCR. The 140-residue stretch at 461 to 600 folds into the SIS domain; that stretch reads AIEILNGARR…AVGVAIRRAS (140 aa). The helical transmembrane segment at 576 to 596 threads the bilayer; the sequence is SMISRILHLLMIDILAVGVAI.

It in the N-terminal section; belongs to the bacterial glucokinase family.

Its subcellular location is the membrane. It carries out the reaction D-glucose + ATP = D-glucose 6-phosphate + ADP + H(+). The protein is Bifunctional protein glk (glk) of Burkholderia lata (strain ATCC 17760 / DSM 23089 / LMG 22485 / NCIMB 9086 / R18194 / 383).